The chain runs to 160 residues: Putative antiporter subunit mnhE2 (160 aa).

Helical transmembrane passes span 23-43, 55-75, and 100-120; these read FKFTTFFAGFLIGLIVIYILH, IWVAIKFLAVYLYQLITSSIS, and SNWAITFLTILIIITPGSTVI.

Belongs to the CPA3 antiporters (TC 2.A.63) subunit E family. As to quaternary structure, may form a heterooligomeric complex that consists of seven subunits: mnhA2, mnhB2, mnhC2, mnhD2, mnhE2, mnhF2 and mnhG2.

It localises to the cell membrane. The sequence is that of Putative antiporter subunit mnhE2 (mnhE2) from Staphylococcus epidermidis (strain ATCC 35984 / DSM 28319 / BCRC 17069 / CCUG 31568 / BM 3577 / RP62A).